The primary structure comprises 365 residues: D-alanine--D-alanine ligase (365 aa).

One can recognise an ATP-grasp domain in the interval 135–345 (KLLLKSFNIP…YGSLVDKLIA (211 aa)). 168–223 (KQSLDYPVIVKPAMLGSSIGISIAYNETQIEKCIEEAFAYDLTVVIEKFMRAREIE) is an ATP binding site. Mg(2+) contacts are provided by D298, E312, and N314.

Belongs to the D-alanine--D-alanine ligase family. Mg(2+) serves as cofactor. Mn(2+) is required as a cofactor.

The protein localises to the cytoplasm. It catalyses the reaction 2 D-alanine + ATP = D-alanyl-D-alanine + ADP + phosphate + H(+). It functions in the pathway cell wall biogenesis; peptidoglycan biosynthesis. Functionally, cell wall formation. The sequence is that of D-alanine--D-alanine ligase from Borrelia turicatae (strain 91E135).